The primary structure comprises 332 residues: Glycerol-3-phosphate dehydrogenase [NAD(P)+] (332 aa).

Residues Ser-11, Trp-12, Arg-32, Arg-33, and Lys-106 each coordinate NADPH. 2 residues coordinate sn-glycerol 3-phosphate: Lys-106 and Gly-136. Ala-140 is an NADPH binding site. 5 residues coordinate sn-glycerol 3-phosphate: Lys-191, Asp-244, Ser-254, Arg-255, and Asn-256. The active-site Proton acceptor is Lys-191. Arg-255 serves as a coordination point for NADPH. Residues Val-280 and Glu-282 each coordinate NADPH.

The protein belongs to the NAD-dependent glycerol-3-phosphate dehydrogenase family.

Its subcellular location is the cytoplasm. The catalysed reaction is sn-glycerol 3-phosphate + NAD(+) = dihydroxyacetone phosphate + NADH + H(+). The enzyme catalyses sn-glycerol 3-phosphate + NADP(+) = dihydroxyacetone phosphate + NADPH + H(+). It functions in the pathway membrane lipid metabolism; glycerophospholipid metabolism. In terms of biological role, catalyzes the reduction of the glycolytic intermediate dihydroxyacetone phosphate (DHAP) to sn-glycerol 3-phosphate (G3P), the key precursor for phospholipid synthesis. This chain is Glycerol-3-phosphate dehydrogenase [NAD(P)+], found in Corynebacterium kroppenstedtii (strain DSM 44385 / JCM 11950 / CIP 105744 / CCUG 35717).